A 184-amino-acid polypeptide reads, in one-letter code: Ribosome-recycling factor (184 aa).

It belongs to the RRF family.

It is found in the cytoplasm. In terms of biological role, responsible for the release of ribosomes from messenger RNA at the termination of protein biosynthesis. May increase the efficiency of translation by recycling ribosomes from one round of translation to another. The protein is Ribosome-recycling factor of Bifidobacterium adolescentis (strain ATCC 15703 / DSM 20083 / NCTC 11814 / E194a).